Reading from the N-terminus, the 969-residue chain is Endogenous retrovirus group K member 11 Pol protein (969 aa).

The region spanning Leu-57 to Ile-245 is the Reverse transcriptase domain. Residues Leu-161 to Gly-164 carry the LPQG motif. Residues Leu-460–Ile-590 enclose the RNase H type-1 domain. 4 residues coordinate Mg(2+): Asp-469, Glu-497, Asp-517, and Asp-582. The Integrase-type zinc finger occupies Ser-587 to Gln-628. 4 residues coordinate Zn(2+): His-596, His-600, Cys-624, and Cys-627. The 162-residue stretch at Arg-642–Lys-803 folds into the Integrase catalytic domain. A DNA-binding region (integrase-type) is located at residues Lys-811–Glu-859.

Belongs to the beta type-B retroviral polymerase family. HERV class-II K(HML-2) pol subfamily.

It carries out the reaction DNA(n) + a 2'-deoxyribonucleoside 5'-triphosphate = DNA(n+1) + diphosphate. The enzyme catalyses Endonucleolytic cleavage to 5'-phosphomonoester.. In terms of biological role, early post-infection, the reverse transcriptase converts the viral RNA genome into double-stranded viral DNA. The RNase H domain of the reverse transcriptase performs two functions. It degrades the RNA template and specifically removes the RNA primer from the RNA/DNA hybrid. Following nuclear import, the integrase catalyzes the insertion of the linear, double-stranded viral DNA into the host cell chromosome. Endogenous Pol proteins may have kept, lost or modified their original function during evolution. The polypeptide is Endogenous retrovirus group K member 11 Pol protein (ERVK-11) (Homo sapiens (Human)).